The following is a 479-amino-acid chain: Spindly-like protein spdl-1 (479 aa).

Coiled-coil stretches lie at residues D4–L180, E210–V250, and L321–H357.

As to quaternary structure, interacts with Zwilch homolog zwl-1, a component of the RZZ complex. Interacts with mdf-1 and mdf-2.

The protein resides in the chromosome. It localises to the centromere. The protein localises to the kinetochore. Its subcellular location is the cytoplasm. It is found in the cytoskeleton. The protein resides in the spindle pole. Functionally, transient kinetochore component required for chromosome and spindle pole alignment and chromosome segregation during mitosis. Functions downstream of the RZZ complex to mediate kinetochore-microtubule attachments and nuclear envelope breakdown during cell division. Required for kinetochore assembly and localizes the checkpoint proteins mdf-1 and mdf-2, dynein and dynactin to unattached kinetochores. Dynein is believed to control the initial lateral interaction between the kinetochore and spindle microtubules and to facilitate the subsequent formation of end-on kinetochore-microtubule attachments mediated by the NDC80 complex. Required for embryonic development. In Caenorhabditis elegans, this protein is Spindly-like protein spdl-1.